Here is a 154-residue protein sequence, read N- to C-terminus: MGLSDGEWQSVLNVWGKVEADLAGHGQEILIRLFTAHPETLEKFDKFKNLKTPDEMKASEDLKKHGVTVLTALGGILKKKGHHEAEIKPLAQSHATKHKIPVKYLEFISEAIIHVLQSKHPGDFGADAQGAMNKALELFRNDIAAKYKELGFQG.

Positions glycine 2–lysine 148 constitute a Globin domain. The residue at position 4 (serine 4) is a Phosphoserine. Histidine 65 provides a ligand contact to nitrite. Position 65 (histidine 65) interacts with O2. Threonine 68 carries the phosphothreonine modification. Histidine 94 contacts heme b.

This sequence belongs to the globin family. Monomeric.

The protein localises to the cytoplasm. The protein resides in the sarcoplasm. The catalysed reaction is Fe(III)-heme b-[protein] + nitric oxide + H2O = Fe(II)-heme b-[protein] + nitrite + 2 H(+). It catalyses the reaction H2O2 + AH2 = A + 2 H2O. Its function is as follows. Monomeric heme protein which primary function is to store oxygen and facilitate its diffusion within muscle tissues. Reversibly binds oxygen through a pentacoordinated heme iron and enables its timely and efficient release as needed during periods of heightened demand. Depending on the oxidative conditions of tissues and cells, and in addition to its ability to bind oxygen, it also has a nitrite reductase activity whereby it regulates the production of bioactive nitric oxide. Under stress conditions, like hypoxia and anoxia, it also protects cells against reactive oxygen species thanks to its pseudoperoxidase activity. The polypeptide is Myoglobin (MB) (Perodicticus potto edwarsi (Potto)).